Reading from the N-terminus, the 120-residue chain is Basic phospholipase A2 Cc2-PLA2 (120 aa).

7 disulfides stabilise this stretch: C26–C113, C28–C44, C43–C95, C49–C120, C50–C88, C57–C81, and C75–C86. Ca(2+) is bound by residues Y27, G29, and G31. H47 is an active-site residue. D48 is a Ca(2+) binding site. D89 is a catalytic residue.

It belongs to the phospholipase A2 family. Group II subfamily. D49 sub-subfamily. In terms of assembly, monomer. Ca(2+) serves as cofactor. As to expression, expressed by the venom gland.

The protein resides in the secreted. It catalyses the reaction a 1,2-diacyl-sn-glycero-3-phosphocholine + H2O = a 1-acyl-sn-glycero-3-phosphocholine + a fatty acid + H(+). In terms of biological role, basic phospholipase A2 that inhibits ADP-, thrombin- and arachidonic acid-induced platelet aggregation. It also exhibits anticoagulant effects upon human plasma in vitro. It induces a high hemolytic activity reaching its maximum after 24 hours. It induces a marked elevation of plasmatic levels of interleukin-6 and -10, eosinophil peroxidase and complement lytic activities and it also provokes a drastic increase of lymphocytes, monocytes and neutrophils in peripheral blood accompanied by a rapid intense migration of neutrophils to the peritoneal cavity. PLA2 catalyzes the calcium-dependent hydrolysis of the 2-acyl groups in 3-sn-phosphoglycerides. This is Basic phospholipase A2 Cc2-PLA2 from Cerastes cerastes (Horned desert viper).